A 573-amino-acid polypeptide reads, in one-letter code: Glucocorticoid modulatory element-binding protein 1 (573 aa).

At alanine 2 the chain carries N-acetylalanine. Positions 82–166 constitute an SAND domain; the sequence is TGTIEANEDM…RKMMDSGQID (85 aa). Cysteine 113 is a binding site for Zn(2+). DNA contacts are provided by lysine 139, lysine 143, lysine 146, and arginine 157. 3 residues coordinate Zn(2+): histidine 170, cysteine 174, and cysteine 178. Positions 321–367 form a coiled coil; that stretch reads LDNRRNQVEQGEEQFLYTLTDLERQLEEQKKQGQDHRLKSQTVQNVV. The interval 370–398 is disordered; it reads PVSTPKPPKRPRLQRPASTTVLSPSPPVQ.

As to quaternary structure, homodimer, and heterodimer of GMEB1 and GMEB2. GMEB1 and GMEB2 form the parvovirus initiator complex (PIF). Interacts with the glucocorticoid receptor (NR3C1) and NCOA2/TIF2. May interact with HSP27 and CREB-binding protein (CBP).

It localises to the nucleus. Its subcellular location is the cytoplasm. In terms of biological role, trans-acting factor that binds to glucocorticoid modulatory elements (GME) present in the TAT (tyrosine aminotransferase) promoter and increases sensitivity to low concentrations of glucocorticoids. Also binds to the transferrin receptor promoter. Essential auxiliary factor for the replication of parvoviruses. This chain is Glucocorticoid modulatory element-binding protein 1 (GMEB1), found in Homo sapiens (Human).